Reading from the N-terminus, the 122-residue chain is Large ribosomal subunit protein uL14 (122 aa).

This sequence belongs to the universal ribosomal protein uL14 family. As to quaternary structure, part of the 50S ribosomal subunit. Forms a cluster with proteins L3 and L19. In the 70S ribosome, L14 and L19 interact and together make contacts with the 16S rRNA in bridges B5 and B8.

In terms of biological role, binds to 23S rRNA. Forms part of two intersubunit bridges in the 70S ribosome. In Heliobacterium modesticaldum (strain ATCC 51547 / Ice1), this protein is Large ribosomal subunit protein uL14.